The primary structure comprises 290 residues: Lipoyl synthase 2 (290 aa).

Residues Cys37, Cys42, Cys48, Cys63, Cys67, Cys70, and Ser283 each coordinate [4Fe-4S] cluster. Residues 49–272 (YGQKTATFLL…GNIARELGFS (224 aa)) enclose the Radical SAM core domain.

It belongs to the radical SAM superfamily. Lipoyl synthase family. Requires [4Fe-4S] cluster as cofactor.

It is found in the cytoplasm. The catalysed reaction is [[Fe-S] cluster scaffold protein carrying a second [4Fe-4S](2+) cluster] + N(6)-octanoyl-L-lysyl-[protein] + 2 oxidized [2Fe-2S]-[ferredoxin] + 2 S-adenosyl-L-methionine + 4 H(+) = [[Fe-S] cluster scaffold protein] + N(6)-[(R)-dihydrolipoyl]-L-lysyl-[protein] + 4 Fe(3+) + 2 hydrogen sulfide + 2 5'-deoxyadenosine + 2 L-methionine + 2 reduced [2Fe-2S]-[ferredoxin]. The protein operates within protein modification; protein lipoylation via endogenous pathway; protein N(6)-(lipoyl)lysine from octanoyl-[acyl-carrier-protein]: step 2/2. Catalyzes the radical-mediated insertion of two sulfur atoms into the C-6 and C-8 positions of the octanoyl moiety bound to the lipoyl domains of lipoate-dependent enzymes, thereby converting the octanoylated domains into lipoylated derivatives. The chain is Lipoyl synthase 2 from Thermosynechococcus vestitus (strain NIES-2133 / IAM M-273 / BP-1).